Reading from the N-terminus, the 658-residue chain is DNA mismatch repair protein MutL (658 aa).

The segment covering 114–130 has biased composition (basic and acidic residues); sequence RQEDSSHATQVKAEDGK. 2 disordered regions span residues 114-138 and 355-405; these read RQED…TAAA and PSEN…HSLS.

It belongs to the DNA mismatch repair MutL/HexB family.

This protein is involved in the repair of mismatches in DNA. It is required for dam-dependent methyl-directed DNA mismatch repair. May act as a 'molecular matchmaker', a protein that promotes the formation of a stable complex between two or more DNA-binding proteins in an ATP-dependent manner without itself being part of a final effector complex. The protein is DNA mismatch repair protein MutL of Neisseria gonorrhoeae (strain ATCC 700825 / FA 1090).